The primary structure comprises 534 residues: Pentatricopeptide repeat-containing protein At5g08305 (534 aa).

11 PPR repeats span residues 41-71, 72-106, 107-141, 142-172, 173-203, 204-238, 240-274, 275-305, 308-342, 343-377, and 378-408; these read PFVS…LSDP, PNYG…GLLP, DHMT…GLEW, DLFI…MPHK, NLVT…MSER, DVVT…GSSK, NEVT…HLPL, TVIL…ASVK, DALM…KIDP, DEIT…GAEP, and KSEH…MPIK. The segment at 413–488 is type E motif; the sequence is MLGALLNGCI…IAGHSILDLD (76 aa). Residues 489-519 are type E(+) motif; that stretch reads GTRHRFIAHDKTHFHSDKIYAVLQLTGAWMN.

Belongs to the PPR family. PCMP-E subfamily.

The chain is Pentatricopeptide repeat-containing protein At5g08305 (PCMP-E105) from Arabidopsis thaliana (Mouse-ear cress).